The primary structure comprises 388 residues: Succinate--CoA ligase [ADP-forming] subunit beta (388 aa).

The ATP-grasp domain maps to 9-244; the sequence is KEILRKYNVP…LDEEDANEIE (236 aa). ATP is bound by residues Lys46, 53-55, Glu99, Ala102, and Glu107; that span reads GRG. Mg(2+) contacts are provided by Asn199 and Asp213. Residues Asn264 and 321 to 323 contribute to the substrate site; that span reads GIM.

It belongs to the succinate/malate CoA ligase beta subunit family. As to quaternary structure, heterotetramer of two alpha and two beta subunits. It depends on Mg(2+) as a cofactor.

It catalyses the reaction succinate + ATP + CoA = succinyl-CoA + ADP + phosphate. It carries out the reaction GTP + succinate + CoA = succinyl-CoA + GDP + phosphate. It participates in carbohydrate metabolism; tricarboxylic acid cycle; succinate from succinyl-CoA (ligase route): step 1/1. In terms of biological role, succinyl-CoA synthetase functions in the citric acid cycle (TCA), coupling the hydrolysis of succinyl-CoA to the synthesis of either ATP or GTP and thus represents the only step of substrate-level phosphorylation in the TCA. The beta subunit provides nucleotide specificity of the enzyme and binds the substrate succinate, while the binding sites for coenzyme A and phosphate are found in the alpha subunit. The chain is Succinate--CoA ligase [ADP-forming] subunit beta from Ralstonia nicotianae (strain ATCC BAA-1114 / GMI1000) (Ralstonia solanacearum).